The following is a 121-amino-acid chain: Large ribosomal subunit protein uL18 (121 aa).

The protein belongs to the universal ribosomal protein uL18 family. As to quaternary structure, part of the 50S ribosomal subunit; part of the 5S rRNA/L5/L18/L25 subcomplex. Contacts the 5S and 23S rRNAs.

In terms of biological role, this is one of the proteins that bind and probably mediate the attachment of the 5S RNA into the large ribosomal subunit, where it forms part of the central protuberance. The polypeptide is Large ribosomal subunit protein uL18 (Ehrlichia canis (strain Jake)).